The sequence spans 407 residues: 1-deoxy-D-xylulose 5-phosphate reductoisomerase (407 aa).

NADPH-binding residues include Thr25, Gly26, Ser27, Ile28, Asn53, and Asn136. 1-deoxy-D-xylulose 5-phosphate is bound at residue Lys137. Glu138 contacts NADPH. Mn(2+) is bound at residue Asp162. Positions 163, 164, 188, and 211 each coordinate 1-deoxy-D-xylulose 5-phosphate. Residue Glu164 coordinates Mn(2+). Gly217 provides a ligand contact to NADPH. 1-deoxy-D-xylulose 5-phosphate-binding residues include Ser224, Asn229, Lys230, and Glu233. Glu233 is a Mn(2+) binding site.

The protein belongs to the DXR family. Mg(2+) is required as a cofactor. Requires Mn(2+) as cofactor.

The enzyme catalyses 2-C-methyl-D-erythritol 4-phosphate + NADP(+) = 1-deoxy-D-xylulose 5-phosphate + NADPH + H(+). The protein operates within isoprenoid biosynthesis; isopentenyl diphosphate biosynthesis via DXP pathway; isopentenyl diphosphate from 1-deoxy-D-xylulose 5-phosphate: step 1/6. Catalyzes the NADPH-dependent rearrangement and reduction of 1-deoxy-D-xylulose-5-phosphate (DXP) to 2-C-methyl-D-erythritol 4-phosphate (MEP). The chain is 1-deoxy-D-xylulose 5-phosphate reductoisomerase from Nitrobacter winogradskyi (strain ATCC 25391 / DSM 10237 / CIP 104748 / NCIMB 11846 / Nb-255).